The sequence spans 159 residues: ATP synthase subunit b (159 aa).

A helical transmembrane segment spans residues 2–22 (NISIPQIIAAILNFIILLLIV).

Belongs to the ATPase B chain family. In terms of assembly, F-type ATPases have 2 components, F(1) - the catalytic core - and F(0) - the membrane proton channel. F(1) has five subunits: alpha(3), beta(3), gamma(1), delta(1), epsilon(1). F(0) has three main subunits: a(1), b(2) and c(10-14). The alpha and beta chains form an alternating ring which encloses part of the gamma chain. F(1) is attached to F(0) by a central stalk formed by the gamma and epsilon chains, while a peripheral stalk is formed by the delta and b chains.

It is found in the cell membrane. In terms of biological role, f(1)F(0) ATP synthase produces ATP from ADP in the presence of a proton or sodium gradient. F-type ATPases consist of two structural domains, F(1) containing the extramembraneous catalytic core and F(0) containing the membrane proton channel, linked together by a central stalk and a peripheral stalk. During catalysis, ATP synthesis in the catalytic domain of F(1) is coupled via a rotary mechanism of the central stalk subunits to proton translocation. Its function is as follows. Component of the F(0) channel, it forms part of the peripheral stalk, linking F(1) to F(0). This chain is ATP synthase subunit b, found in Clostridium botulinum (strain Okra / Type B1).